The chain runs to 287 residues: Kit ligand (287 aa).

An N-terminal signal peptide occupies residues 1 to 25; the sequence is MKKAQTWIITCFCLQLLLLNPLVKT. Residues 26–225 lie on the Extracellular side of the membrane; that stretch reads QSSCGNPVTD…LGFISSSSLQ (200 aa). 2 cysteine pairs are disulfide-bonded: Cys-29–Cys-117 and Cys-68–Cys-167. N-linked (GlcNAc...) asparagine glycans are attached at residues Asn-100, Asn-106, Asn-149, Asn-178, Asn-200, and Asn-206. A helical transmembrane segment spans residues 226-246; it reads GISIALTSLLSLLIGFILGVI. Residues 247 to 287 lie on the Cytoplasmic side of the membrane; sequence YWKKTHPKSRPESNETTQCHGCQEENEISMLQQKEKEHLQV.

The protein belongs to the SCF family. As to quaternary structure, homodimer, non-covalently linked. A soluble form is produced by proteolytic processing of isoform 1 in the extracellular domain.

It localises to the cell membrane. Its subcellular location is the secreted. The protein localises to the cytoplasm. The protein resides in the cytoskeleton. It is found in the cell projection. It localises to the lamellipodium. Its subcellular location is the filopodium. Functionally, ligand for the receptor-type protein-tyrosine kinase KIT. Plays an essential role in the regulation of cell survival and proliferation, hematopoiesis, stem cell maintenance, gametogenesis, mast cell development, migration and function, and in melanogenesis. KITLG/SCF binding can activate several signaling pathways. Acts synergistically with other cytokines, probably interleukins. The polypeptide is Kit ligand (KITLG) (Coturnix japonica (Japanese quail)).